Reading from the N-terminus, the 115-residue chain is Guanylin (115 aa).

An N-terminal signal peptide occupies residues 1–21; sequence MNACVLSVLCLLGAVAVLVEG. Residues 22–100 constitute a propeptide that is removed on maturation; it reads VTVQDGDLSF…LQRLEAIAQD (79 aa). Intrachain disulfides connect Cys69–Cys82, Cys104–Cys112, and Cys107–Cys115.

Belongs to the guanylin family.

Its subcellular location is the secreted. Endogenous activator of intestinal guanylate cyclase. It stimulates this enzyme through the same receptor binding region as the heat-stable enterotoxins. The sequence is that of Guanylin (GUCA2A) from Notomys alexis (Spinifex hopping mouse).